Consider the following 333-residue polypeptide: Phenylalanine--tRNA ligase alpha subunit (333 aa).

E248 is a Mg(2+) binding site.

The protein belongs to the class-II aminoacyl-tRNA synthetase family. Phe-tRNA synthetase alpha subunit type 1 subfamily. In terms of assembly, tetramer of two alpha and two beta subunits. Requires Mg(2+) as cofactor.

It is found in the cytoplasm. It catalyses the reaction tRNA(Phe) + L-phenylalanine + ATP = L-phenylalanyl-tRNA(Phe) + AMP + diphosphate + H(+). In Ureaplasma parvum serovar 3 (strain ATCC 27815 / 27 / NCTC 11736), this protein is Phenylalanine--tRNA ligase alpha subunit.